The chain runs to 351 residues: MFQLLAGVRMNSTGRPRAKIILLYALLIAFNIGAWLCALAAFRDHPVLLGTALLAYGLGLRHAVDADHLAAIDNVTRKLMQDGRRPITAGLWFSLGHSSVVVLASVLIAVMATTLQERLDAFHEVGSVIGTLASALFLFAIAAINLVILRSAYRAFRRVRRGGIYVEEDFDLLFGNRGFLARIFRPLFRFITRSWHMYPLGMLFALGFDTATEVALLGISTMEASRGVPIWSILVFPALFTAGMALIDTIDSILMCGAYAWAYAKPVRKLYYNMTITFVSAIVALIVGGIETLGLLADKFMLKGVFWNAVGALNENFCQLGFVIIGIFTVCWVVSIVVYRLRRYDDSEVRA.

The Cytoplasmic segment spans residues 1–19 (MFQLLAGVRMNSTGRPRAK). A helical membrane pass occupies residues 20-40 (IILLYALLIAFNIGAWLCALA). The Periplasmic segment spans residues 41 to 51 (AFRDHPVLLGT). A helical transmembrane segment spans residues 52 to 72 (ALLAYGLGLRHAVDADHLAAI). The Cytoplasmic segment spans residues 73 to 94 (DNVTRKLMQDGRRPITAGLWFS). A helical transmembrane segment spans residues 95 to 115 (LGHSSVVVLASVLIAVMATTL). Topologically, residues 116–128 (QERLDAFHEVGSV) are periplasmic. A helical transmembrane segment spans residues 129-149 (IGTLASALFLFAIAAINLVIL). Topologically, residues 150–199 (RSAYRAFRRVRRGGIYVEEDFDLLFGNRGFLARIFRPLFRFITRSWHMYP) are cytoplasmic. The chain crosses the membrane as a helical span at residues 200–220 (LGMLFALGFDTATEVALLGIS). At 221 to 243 (TMEASRGVPIWSILVFPALFTAG) the chain is on the periplasmic side. A helical membrane pass occupies residues 244-264 (MALIDTIDSILMCGAYAWAYA). The Cytoplasmic segment spans residues 265–269 (KPVRK). A helical membrane pass occupies residues 270–290 (LYYNMTITFVSAIVALIVGGI). Residues 291–316 (ETLGLLADKFMLKGVFWNAVGALNEN) are Periplasmic-facing. Residues 317–337 (FCQLGFVIIGIFTVCWVVSIV) form a helical membrane-spanning segment. At 338-351 (VYRLRRYDDSEVRA) the chain is on the cytoplasmic side.

It belongs to the NiCoT transporter (TC 2.A.52) family.

The protein resides in the cell inner membrane. High-affinity nickel transporter responsible for nickel uptake. Necessary for high levels of activity of hydrogenase and urease. Does not transport cobalt. This chain is High-affinity nickel transport protein (hoxN), found in Cupriavidus necator (strain ATCC 17699 / DSM 428 / KCTC 22496 / NCIMB 10442 / H16 / Stanier 337) (Ralstonia eutropha).